The primary structure comprises 453 residues: Bifunctional protein GlmU (453 aa).

The segment at 1 to 225 is pyrophosphorylase; sequence MNIVILAAGT…DWETLGVNSK (225 aa). UDP-N-acetyl-alpha-D-glucosamine contacts are provided by residues 6–9, lysine 20, glutamine 71, 76–77, 98–100, glycine 135, glutamate 150, asparagine 165, and asparagine 223; these read LAAG, GT, and YGD. Aspartate 100 is a binding site for Mg(2+). Position 223 (asparagine 223) interacts with Mg(2+). The linker stretch occupies residues 226–246; the sequence is AQLAELERIHQRNVADALLVE. Positions 247–453 are N-acetyltransferase; the sequence is GVTLADPARV…GYVRPVKKKS (207 aa). Residues arginine 329 and lysine 347 each contribute to the UDP-N-acetyl-alpha-D-glucosamine site. Histidine 359 acts as the Proton acceptor in catalysis. The UDP-N-acetyl-alpha-D-glucosamine site is built by tyrosine 362 and asparagine 373. Acetyl-CoA-binding positions include alanine 376, 382–383, serine 401, and alanine 419; that span reads NY.

This sequence in the N-terminal section; belongs to the N-acetylglucosamine-1-phosphate uridyltransferase family. In the C-terminal section; belongs to the transferase hexapeptide repeat family. Homotrimer. The cofactor is Mg(2+).

It is found in the cytoplasm. The catalysed reaction is alpha-D-glucosamine 1-phosphate + acetyl-CoA = N-acetyl-alpha-D-glucosamine 1-phosphate + CoA + H(+). It catalyses the reaction N-acetyl-alpha-D-glucosamine 1-phosphate + UTP + H(+) = UDP-N-acetyl-alpha-D-glucosamine + diphosphate. It participates in nucleotide-sugar biosynthesis; UDP-N-acetyl-alpha-D-glucosamine biosynthesis; N-acetyl-alpha-D-glucosamine 1-phosphate from alpha-D-glucosamine 6-phosphate (route II): step 2/2. The protein operates within nucleotide-sugar biosynthesis; UDP-N-acetyl-alpha-D-glucosamine biosynthesis; UDP-N-acetyl-alpha-D-glucosamine from N-acetyl-alpha-D-glucosamine 1-phosphate: step 1/1. It functions in the pathway bacterial outer membrane biogenesis; LPS lipid A biosynthesis. Its function is as follows. Catalyzes the last two sequential reactions in the de novo biosynthetic pathway for UDP-N-acetylglucosamine (UDP-GlcNAc). The C-terminal domain catalyzes the transfer of acetyl group from acetyl coenzyme A to glucosamine-1-phosphate (GlcN-1-P) to produce N-acetylglucosamine-1-phosphate (GlcNAc-1-P), which is converted into UDP-GlcNAc by the transfer of uridine 5-monophosphate (from uridine 5-triphosphate), a reaction catalyzed by the N-terminal domain. The protein is Bifunctional protein GlmU of Burkholderia vietnamiensis (strain G4 / LMG 22486) (Burkholderia cepacia (strain R1808)).